Here is a 91-residue protein sequence, read N- to C-terminus: Small ribosomal subunit protein bS20 (91 aa).

The interval 1–28 (MANTASAEKRNRQAQKRRARNVQVRTGV) is disordered.

It belongs to the bacterial ribosomal protein bS20 family.

Functionally, binds directly to 16S ribosomal RNA. This chain is Small ribosomal subunit protein bS20, found in Anaeromyxobacter dehalogenans (strain 2CP-1 / ATCC BAA-258).